Here is a 354-residue protein sequence, read N- to C-terminus: Fructose-1,6-bisphosphatase class 1 (354 aa).

The Mg(2+) site is built by glutamate 112, aspartate 134, leucine 136, and aspartate 137. Substrate-binding positions include 137–140 (DGSS), asparagine 229, tyrosine 257, and lysine 287. Glutamate 293 contributes to the Mg(2+) binding site.

Belongs to the FBPase class 1 family. In terms of assembly, homotetramer. Requires Mg(2+) as cofactor.

The protein localises to the cytoplasm. The catalysed reaction is beta-D-fructose 1,6-bisphosphate + H2O = beta-D-fructose 6-phosphate + phosphate. The protein operates within carbohydrate biosynthesis; Calvin cycle. The polypeptide is Fructose-1,6-bisphosphatase class 1 (Trichodesmium erythraeum (strain IMS101)).